Here is a 104-residue protein sequence, read N- to C-terminus: Co-chaperonin GroES 1 (104 aa).

The protein belongs to the GroES chaperonin family. In terms of assembly, heptamer of 7 subunits arranged in a ring. Interacts with the chaperonin GroEL.

It is found in the cytoplasm. Functionally, together with the chaperonin GroEL, plays an essential role in assisting protein folding. The GroEL-GroES system forms a nano-cage that allows encapsulation of the non-native substrate proteins and provides a physical environment optimized to promote and accelerate protein folding. GroES binds to the apical surface of the GroEL ring, thereby capping the opening of the GroEL channel. This Mesorhizobium japonicum (strain LMG 29417 / CECT 9101 / MAFF 303099) (Mesorhizobium loti (strain MAFF 303099)) protein is Co-chaperonin GroES 1.